We begin with the raw amino-acid sequence, 205 residues long: Small ribosomal subunit protein uS4 (205 aa).

The segment at 27–46 is disordered; sequence LNKRDYAPGQHGQRRKGKPS. Positions 118-178 constitute an S4 RNA-binding domain; it reads HGHVLVNGKR…HVDHRLMKGT (61 aa).

The protein belongs to the universal ribosomal protein uS4 family. As to quaternary structure, part of the 30S ribosomal subunit. Contacts protein S5. The interaction surface between S4 and S5 is involved in control of translational fidelity.

One of the primary rRNA binding proteins, it binds directly to 16S rRNA where it nucleates assembly of the body of the 30S subunit. Functionally, with S5 and S12 plays an important role in translational accuracy. The chain is Small ribosomal subunit protein uS4 from Granulibacter bethesdensis (strain ATCC BAA-1260 / CGDNIH1).